The sequence spans 285 residues: Small ribosomal subunit protein uS2 (285 aa).

The tract at residues 228–285 (RAGLSADKDAKPEAGAGEPLAEWEQELLSQAAPAAEAEAAPAAEAEAAPAAEAPATEA) is disordered. Positions 258 to 285 (AAPAAEAEAAPAAEAEAAPAAEAPATEA) are enriched in low complexity.

The protein belongs to the universal ribosomal protein uS2 family.

This is Small ribosomal subunit protein uS2 from Rhodococcus erythropolis (strain PR4 / NBRC 100887).